Reading from the N-terminus, the 998-residue chain is Collagen alpha-1(I) chain (998 aa).

The segment at 1–998 is disordered; that stretch reads GGVSVPGPMG…PGPPGPPGPP (998 aa). 4-hydroxyproline occurs at positions 18, 21, 24, 33, 48, 63, 69, 78, and 84. Low complexity predominate over residues 26-39; sequence PQGFQGPPGSSGPM. A compositionally biased stretch (basic and acidic residues) spans 51 to 65; that stretch reads NGDDGEAGKPGRPGE. Lysine 87 is subject to 5-hydroxylysine; alternate. O-linked (Gal...) hydroxylysine; alternate glycosylation occurs at lysine 87. Serine 93 is modified (phosphoserine). Positions 101–115 are enriched in low complexity; that stretch reads DAGPAGPKQMGPRGL. Residues proline 116, proline 122, proline 143, proline 152, proline 155, proline 182, proline 185, proline 197, proline 203, proline 212, proline 218, proline 221, and proline 236 each carry the 4-hydroxyproline modification. Low complexity predominate over residues 122–140; sequence PGASGPAGARGNDGATGAA. Pro residues predominate over residues 142-154; it reads PPGPTGPAGPPGF. The segment covering 188–238 has biased composition (low complexity); sequence AGAAGPAGNPGADGQPGAKGANGAPGIAGAPGFPGARGPSGPQGPSGAPGP. The residue at position 239 (lysine 239) is a 5-hydroxylysine. Proline 245, proline 248, proline 260, proline 269, proline 284, proline 290, proline 299, and proline 305 each carry 4-hydroxyproline. Positions 294-303 are enriched in gly residues; that stretch reads GERGGPGSRG. Position 314 is a 5-hydroxylysine (lysine 314). A 4-hydroxyproline mark is found at proline 323, proline 332, proline 338, proline 344, proline 353, proline 356, proline 365, proline 374, proline 380, proline 392, proline 401, proline 410, proline 413, proline 431, proline 449, proline 455, proline 461, proline 467, proline 473, proline 479, proline 491, proline 500, proline 511, proline 523, proline 526, proline 532, proline 538, and proline 547. The span at 347–401 shows a compositional bias: low complexity; the sequence is KGLTGSPGSPGPDGKTGPPGPAGQDGRPGPAGPPGARGQAGVMGFPGPKGAAGEP. The span at 443-470 shows a compositional bias: low complexity; it reads QGPAGSPGFQGLPGPAGPPGEAGKPGEQ. Positions 513–535 are enriched in low complexity; that stretch reads NDGAKGDAGAPGAPGSQGAPGLQ. 5-hydroxylysine is present on lysine 559. 2 positions are modified to 4-hydroxyproline: proline 565 and proline 580. Positions 592 to 606 are enriched in low complexity; that stretch reads TGPSGPAGPTGARGA. A Phosphoserine modification is found at serine 595. Proline 607, proline 613, proline 616, proline 625, proline 631, proline 649, proline 658, and proline 667 each carry 4-hydroxyproline. Over residues 619-646 the composition is skewed to low complexity; it reads AGFAGPPGADGQPGAKGEPGDAGAKGDA. A compositionally biased stretch (pro residues) spans 648-660; sequence PPGPAGPTGPPGP. The residue at position 670 (lysine 670) is a 5-hydroxylysine. The span at 675–691 shows a compositional bias: low complexity; the sequence is SAGPPGATGFPGAAGRV. 2 positions are modified to 4-hydroxyproline: proline 679 and proline 685. Proline 693 carries the post-translational modification 3-hydroxyproline. Proline 694, proline 703, proline 706, proline 727, proline 736, proline 744, proline 753, proline 771, proline 780, proline 783, proline 789, proline 804, proline 810, proline 816, proline 825, and proline 831 each carry 4-hydroxyproline. The segment covering 720–729 has biased composition (low complexity); it reads ETGPAGRPGE. Low complexity predominate over residues 741-762; that stretch reads KGSPGADGPAGAPGTPGPQGIA. Residues 803–813 show a composition bias toward pro residues; that stretch reads PPGPMGPPGLA. Over residues 815 to 830 the composition is skewed to low complexity; sequence PPGEAGREGSPGAEGS. Position 840 is a 5-hydroxylysine (lysine 840). Residues 848-863 are compositionally biased toward pro residues; the sequence is PGPPGAPGAPGAPGPV. Proline 851, proline 854, and proline 857 each carry 4-hydroxyproline. The span at 884-898 shows a compositional bias: low complexity; it reads AGPAGARGPAGPQGP. A compositionally biased stretch (basic and acidic residues) spans 899 to 913; sequence RGDKGETGEQGDRGI. A 5-hydroxylysine modification is found at lysine 902. Position 914 is a 5-hydroxylysine; alternate (lysine 914). A glycan (O-linked (Gal...) hydroxylysine; alternate) is linked at lysine 914. 4-hydroxyproline occurs at positions 929, 932, 950, and 965. Residues 932–965 show a composition bias toward low complexity; sequence PGEQGPSGASGPAGPRGPPGSAGTPGKDGLNGLP. Proline 970 carries the post-translational modification 3-hydroxyproline. The residue at position 971 (proline 971) is a 4-hydroxyproline. Residues 983–998 are compositionally biased toward pro residues; the sequence is VGPPGPPGPPGPPGPP. A 3-hydroxyproline modification is found at proline 985. At proline 986 the chain carries 4-hydroxyproline. At proline 988 the chain carries 3-hydroxyproline. A 4-hydroxyproline modification is found at proline 989. At proline 991 the chain carries 3-hydroxyproline. Proline 992, proline 995, and proline 998 each carry 4-hydroxyproline.

It belongs to the fibrillar collagen family. Trimers of one alpha 2(I) and two alpha 1(I) chains. Post-translationally, contains mostly 4-hydroxyproline. Proline residues at the third position of the tripeptide repeating unit (G-X-Y) are hydroxylated in some or all of the chains. Contains 3-hydroxyproline at a few sites. This modification occurs on the first proline residue in the sequence motif Gly-Pro-Hyp, where Hyp is 4-hydroxyproline. In terms of processing, lysine residues at the third position of the tripeptide repeating unit (G-X-Y) are 5-hydroxylated in some or all of the chains. Post-translationally, O-glycosylated on hydroxylated lysine residues. The O-linked glycan consists of a Glc-Gal disaccharide. As to expression, expressed in bones.

The protein localises to the secreted. Its subcellular location is the extracellular space. It is found in the extracellular matrix. Its function is as follows. Type I collagen is a member of group I collagen (fibrillar forming collagen). This chain is Collagen alpha-1(I) chain, found in Glyptodon sp. (strain SLP-2019) (Giant armadillo).